The following is a 194-amino-acid chain: MGKYMRKAKVVVSGEVVAAAVMELAAAPLGVRTRARSLALQKRQGGEYLELRSRRLEKLPPPPPPPPRRRATAAAATADATAAESAEAEVSFGGENVLELEAMERNTRETTPCSLIRDPDTISTPGSTTRRSHSSSHCKVQTPVRHNIIPASAELEAFFAAEEQRQRQAFIDKYNFDPVNDCPLPGRFEWVKLD.

Positions 49–58 (LELRSRRLEK) are enriched in basic and acidic residues. Disordered stretches follow at residues 49–70 (LELR…PRRR) and 107–139 (TRET…SHCK).

The protein belongs to the CDI family. ICK/KRP subfamily.

This chain is Cyclin-dependent kinase inhibitor 4 (KRP4), found in Oryza sativa subsp. japonica (Rice).